The primary structure comprises 297 residues: PsbP domain-containing protein 5, chloroplastic (297 aa).

Belongs to the PsbP family.

Its subcellular location is the plastid. It localises to the chloroplast thylakoid lumen. In terms of biological role, involved in strigolactone biosynthesis. This Arabidopsis thaliana (Mouse-ear cress) protein is PsbP domain-containing protein 5, chloroplastic (PPD5).